The following is a 328-amino-acid chain: MFIIKSMLYRLMQMIVVLFVISTLTFILMKLSPGNPVDKILHLDVAQVSTEQINATKDKLGLNDSLLVQWWHWMNHLLHFNLGKSFESKEPVTQILFNYAPITLLISFSTLVVSLCISIPLGIIAAKRFHKWTDKVIRVISTLSISLPAFFIGIILLFIVTNLMNIDSVILSQFILPVITLSLGMCAYIIRLVRSNLLMLLQSNIVQASRLRGMNERYILIHDLLKPTILPIIPLLGISLGSLIGGTVVIENLFDIPGIGYLLMDSIKSRDYPVIQGCVLFIGFFVVIINTIADLLTLLLDPKQRLQLGNPKIKTNTPLISESSDRHA.

A run of 6 helical transmembrane segments spans residues 11–31 (LMQM…LMKL), 104–124 (LLIS…LGII), 139–159 (VIST…LLFI), 170–190 (ILSQ…AYII), 229–249 (ILPI…GTVV), and 279–299 (VLFI…LTLL). An ABC transmembrane type-1 domain is found at 100-297 (APITLLISFS…IINTIADLLT (198 aa)).

The protein belongs to the binding-protein-dependent transport system permease family. OppBC subfamily. In terms of assembly, the complex is composed of two ATP-binding proteins (NikD and NikE), two transmembrane proteins (NikB and NikC) and a solute-binding protein (NikA).

Its subcellular location is the cell membrane. Its function is as follows. Part of the ABC transporter complex NikABCDE (Opp2) involved in nickel import. Probably responsible for the translocation of the substrate across the membrane. The chain is Nickel import system permease protein NikB from Staphylococcus aureus (strain USA300).